Consider the following 104-residue polypeptide: Flagellar hook-basal body complex protein FliE (104 aa).

It belongs to the FliE family.

It is found in the bacterial flagellum basal body. This is Flagellar hook-basal body complex protein FliE from Escherichia fergusonii (strain ATCC 35469 / DSM 13698 / CCUG 18766 / IAM 14443 / JCM 21226 / LMG 7866 / NBRC 102419 / NCTC 12128 / CDC 0568-73).